A 295-amino-acid polypeptide reads, in one-letter code: Small ribosomal subunit protein bS1 (295 aa).

S1 motif domains lie at 28–97, 115–179, and 193–261; these read GQLV…VSLR, GQTV…LSER, and GQLI…LSTK.

It belongs to the bacterial ribosomal protein bS1 family.

Binds mRNA. This is Small ribosomal subunit protein bS1 (rpsA) from Synechococcus elongatus (strain ATCC 33912 / PCC 7942 / FACHB-805) (Anacystis nidulans R2).